Consider the following 182-residue polypeptide: MTKQKEKRGRRWPWFVAVCVVATLRLFVFSNYVVEGKSMMPTLESGNLLIVNKLSYDIGPIRRFDIIVFHANKKEDYVKRVIGLPGDRIAYKNDILYVNGKKVDEPYLRPYKQKLLDGRLTGDFTLEEVTGKTRVPPGCIFVLGDNRLSSWDSRHFGFVKINQIVGKVDFRYWPFKQFAFQF.

Over 1–13 (MTKQKEKRGRRWP) the chain is Cytoplasmic. The helical transmembrane segment at 14-30 (WFVAVCVVATLRLFVFS) threads the bilayer. The Extracellular segment spans residues 31–182 (NYVVEGKSMM…WPFKQFAFQF (152 aa)). Catalysis depends on residues Ser-38 and Lys-79.

It belongs to the peptidase S26 family.

It localises to the cell membrane. It catalyses the reaction Cleavage of hydrophobic, N-terminal signal or leader sequences from secreted and periplasmic proteins.. The sequence is that of Signal peptidase I (lepB) from Bacillus caldolyticus.